A 259-amino-acid polypeptide reads, in one-letter code: 5'-nucleotidase SurE (259 aa).

Residues D10, D11, S41, and N96 each coordinate a divalent metal cation.

This sequence belongs to the SurE nucleotidase family. The cofactor is a divalent metal cation.

It localises to the cytoplasm. It carries out the reaction a ribonucleoside 5'-phosphate + H2O = a ribonucleoside + phosphate. Nucleotidase that shows phosphatase activity on nucleoside 5'-monophosphates. The polypeptide is 5'-nucleotidase SurE (Wolinella succinogenes (strain ATCC 29543 / DSM 1740 / CCUG 13145 / JCM 31913 / LMG 7466 / NCTC 11488 / FDC 602W) (Vibrio succinogenes)).